Reading from the N-terminus, the 291-residue chain is Nucleotide-binding protein EUBREC_0697 (291 aa).

Residue 8–15 (GMSGAGKS) participates in ATP binding. 59–62 (DVRN) is a GTP binding site.

Belongs to the RapZ-like family.

In terms of biological role, displays ATPase and GTPase activities. This chain is Nucleotide-binding protein EUBREC_0697, found in Agathobacter rectalis (strain ATCC 33656 / DSM 3377 / JCM 17463 / KCTC 5835 / VPI 0990) (Eubacterium rectale).